Consider the following 615-residue polypeptide: 70 kDa neurofilament protein (615 aa).

Residues 1–31 (MSVTQKKTEISTTTTYEGESRPSSGMSGFSY) are disordered. A head region spans residues 1 to 99 (MSVTQKKTEI…KANREREKQD (99 aa)). Polar residues predominate over residues 21 to 30 (RPSSGMSGFS). Residues 96–449 (EKQDMRDLNE…KLLEGEESRV (354 aa)) form the IF rod domain. Positions 100-135 (MRDLNERFANYIEKVRFLEAQNKKLAGELEELKSKW) are coil 1A. Residues 136 to 145 (GKETSAIKEM) are linker 1. The coil 1B stretch occupies residues 146 to 284 (YETELEEARK…VHAQELKELA (139 aa)). Residues 285–303 (ALAYRDTTAENREFWRNEL) form a linker 12 region. Residues 304–449 (AQAIRDIQQE…KLLEGEESRV (146 aa)) are coil 2. The tail stretch occupies residues 450-615 (GMKQIVEQVV…ANYTQNTVYQ (166 aa)). Residues 499 to 612 (AKTTYQRTSK…EDKANYTQNT (114 aa)) enclose the LTD domain.

This sequence belongs to the intermediate filament family.

The sequence is that of 70 kDa neurofilament protein from Doryteuthis pealeii (Longfin inshore squid).